A 515-amino-acid polypeptide reads, in one-letter code: 2-isopropylmalate synthase (515 aa).

The region spanning 4 to 266 (IKFFDTTLRD…ETRLNLQEIK (263 aa)) is the Pyruvate carboxyltransferase domain. Mn(2+)-binding residues include Asp-13, His-201, His-203, and Asn-237. A regulatory domain region spans residues 391 to 515 (QLSSIQVQYG…RAENEKVTTP (125 aa)).

It belongs to the alpha-IPM synthase/homocitrate synthase family. LeuA type 1 subfamily. As to quaternary structure, homodimer. The cofactor is Mn(2+).

It is found in the cytoplasm. The catalysed reaction is 3-methyl-2-oxobutanoate + acetyl-CoA + H2O = (2S)-2-isopropylmalate + CoA + H(+). It participates in amino-acid biosynthesis; L-leucine biosynthesis; L-leucine from 3-methyl-2-oxobutanoate: step 1/4. Functionally, catalyzes the condensation of the acetyl group of acetyl-CoA with 3-methyl-2-oxobutanoate (2-ketoisovalerate) to form 3-carboxy-3-hydroxy-4-methylpentanoate (2-isopropylmalate). In Geobacillus thermodenitrificans (strain NG80-2), this protein is 2-isopropylmalate synthase.